Here is a 548-residue protein sequence, read N- to C-terminus: T-complex protein 1 subunit alpha (548 aa).

It belongs to the TCP-1 chaperonin family. In terms of assembly, heterooligomeric complex of about 850 to 900 kDa that forms two stacked rings, 12 to 16 nm in diameter.

Its subcellular location is the cytoplasm. Molecular chaperone; assists the folding of proteins upon ATP hydrolysis. Known to play a role, in vitro, in the folding of actin and tubulin. This chain is T-complex protein 1 subunit alpha (tcp1), found in Dictyostelium discoideum (Social amoeba).